The following is a 54-amino-acid chain: MWTLKARKEHTGISGKPTARTDRHGSTRSGDSELQASARRFSRLPDRCGAQGVT.

The interval 1 to 54 (MWTLKARKEHTGISGKPTARTDRHGSTRSGDSELQASARRFSRLPDRCGAQGVT) is disordered.

This is an uncharacterized protein from Mycobacterium tuberculosis (strain ATCC 25618 / H37Rv).